The sequence spans 408 residues: Aminoacylase-1B (408 aa).

His-80 contributes to the Zn(2+) binding site. Asp-82 is an active-site residue. Asp-113 is a binding site for Zn(2+). Glu-147 serves as the catalytic Proton acceptor. 3 residues coordinate Zn(2+): Glu-148, Glu-175, and His-373. Ser-408 bears the Phosphoserine mark.

It belongs to the peptidase M20A family. As to quaternary structure, homodimer. It depends on Zn(2+) as a cofactor. As to expression, expressed in kidney.

It is found in the cytoplasm. It carries out the reaction an N-acyl-L-amino acid + H2O = an L-alpha-amino acid + a carboxylate. The catalysed reaction is an N-acetyl-L-cysteine-S-conjugate + H2O = an S-substituted L-cysteine + acetate. Functionally, involved in the hydrolysis of N-acylated or N-acetylated amino acids (except L-aspartate). This is Aminoacylase-1B (Acy1b) from Rattus norvegicus (Rat).